The sequence spans 366 residues: 8-hydroxyquercetin 8-O-methyltransferase (366 aa).

S-adenosyl-L-methionine-binding positions include 207–210, 231–232, 251–252, and Lys-265; these read VGGG, DL, and DM. The Proton acceptor role is filled by His-269.

It belongs to the class I-like SAM-binding methyltransferase superfamily. Cation-independent O-methyltransferase family. COMT subfamily. As to quaternary structure, homodimer.

It carries out the reaction 3,3',4',5,7,8-hexahydroxyflavone + S-adenosyl-L-methionine = 3,3',4',5,7-pentahydroxy-8-methoxyflavone + S-adenosyl-L-homocysteine + H(+). It catalyses the reaction 4',7,8-trihydroxyflavone + S-adenosyl-L-methionine = 4',7-dihydroxy-8-methoxyflavone + S-adenosyl-L-homocysteine + H(+). The catalysed reaction is 8-hydroxy-7-methoxyflavone + S-adenosyl-L-methionine = 7,8-dimethoxyflavone + S-adenosyl-L-homocysteine + H(+). It functions in the pathway flavonoid metabolism. Its function is as follows. Flavonoid 8-O-methyltransferase involved in the biosynthesis of polymethoxylated flavonoids natural products such as pebrellin, aroma compounds which contribute to the flavor of peppermint, and exhibit pharmacological activities such as anti-allergic, anti-oxidant, antibacterial, anti-proliferative, and anti-inflammatory effects. Catalyzes S-adenosylmethionine-dependent regioselective 8-O-methylation of flavonoids; active on various hydroxylated flavonoid substrates, including 7,8,3'4'-tetrahydroxy-flavone, 7,8,4'-trihydroxy-flavone and 8-hydroxy-flavone 7-methyl ether. The chain is 8-hydroxyquercetin 8-O-methyltransferase from Mentha piperita (Peppermint).